The primary structure comprises 1332 residues: MEPSTLYFYVNGRRVTEKNVDPETMLLPYLGRNLRLTGTKYGCGGGGCGACTVMVSRYDRGTGQIRHYPACACLTPLCSLHGAAVTTVEGVGSTRTRLHPVQERIAKSHGTQCGFCTPGMVMSLYALLRSHPQPSEEQLLEALAGNLCRCTGYRPILDAGKTFCKTSGCCQSKENGVCCLDQGVNGVQEAEGEQTSQELCSEEEFVPLDPTQELIFPPELMILAQKQPQKSRVFTGDRVTWISPVTLKDLLEAKAKNPRAPVVMGNTSVGPEMKFKGVFHPVIISPDGIEELSVIKQGNEGLTLGAGLSLAQVQDVLADVVQQLPEEKTQTLCALLKQLRTLAGSQIRNMASLGGHIMSRHLDSDLNPVLAAASCTLHVPSQEGDRQIPLDEHFLSRSPSADLRPQEVLLSVTIPYSRKWEFVSAFRQAQRKRSARAIVNVGMRVFFGAGDGVISELCILYGGVGPAIVCATDACRKLVGRHWTEEMLDEACRLVLGEVAIPGAAPGGRVEFRRTLLVSFLFRFYLQVSQSLSRMDPGRYPSLVGKYESALEDLCLGHHQRTFELQSADAKQLPQDPIGRPIMHLSGIKHTTGEAIYCDDMPLVDRELSLAFVTSSRAHAAILSMDLSEALSLPGVVDIVTAEHLGDANSFAKETLLATDKVLCVGHLVCAVIADSEVQAKRAAEKVKIVYQDLEPLILTIEEAIQHDSFFETERKLESGDVAEAFRTAEQVLEGSIHMGGQEHFYMETQSMLAVPKGEDQEIDLYVSTQFPTYIQEIVASTLKLPVNKVMCHVRRVGGAFGGKVGKTAILAAITAFAALKHCRAVRCILERGEDMLITGGRHPYLGKYKVGFRNNGQVVALDMEHYSNAGSTLDESLMVVEMGLLKMENAYKFPNLRCRGHACKTNLPSNTALRGFGFPQSGLITEACIVEVAARCGLSPEEVREVNMYRGTEQTHYGQEIHTQRLAQCWSECKAKATFSLRRAAVDRFNAGSPWKKRGLAMVPLKFPVGLGSVAMGQAAALVHVYLDGSVLLTHGGIEMGQGVHTKMIQVVSRELKMPMANVHLRGTSTETVPNANVSGGSVVADLNGLAVKDACQTLLKRLEPIISKNPKGTWKEWAQAAFDQSISLSAIGYFRGYDADMDWEKGKGHPFEYFVYGAACSEVEIDCLTGNHKNIRTDIVMDVGRSINPALDLGQVEGAFIQGMGLYTSEELKYGPQGALYTRGPDQYKIPAVCDVPAELHVFFLPPSKNSNTLYSSKGLGESGVFLGCSVLFAIWDAVSAARRERGLPGTLALSCPLTPEKIRMACEDRFTKMIPRDTPGSYVPWDVVV.

The region spanning Ser-4–Val-91 is the 2Fe-2S ferredoxin-type domain. Residues Cys-43, Cys-48, Cys-51, and Cys-73 each contribute to the [2Fe-2S] cluster site. Gln-112 is a binding site for Mo-molybdopterin. Cys-113, Cys-116, Cys-148, and Cys-150 together coordinate [2Fe-2S] cluster. Residue Cys-150 coordinates Mo-molybdopterin. The 186-residue stretch at Phe-234–Lys-419 folds into the FAD-binding PCMH-type domain. FAD is bound by residues Val-262–Val-269, Ala-343, Ser-352, His-356, Asp-365, and Leu-409. Residues Ala-800–Phe-801, Met-1041, Gly-1082–Val-1085, Gln-1197, and Leu-1262 contribute to the Mo-molybdopterin site. Glu-1264 functions as the Proton acceptor; for azaheterocycle hydroxylase activity in the catalytic mechanism.

Belongs to the xanthine dehydrogenase family. Homodimer. The cofactor is [2Fe-2S] cluster. It depends on FAD as a cofactor. Mo-molybdopterin serves as cofactor. As to expression, expressed in liver.

The protein localises to the cytoplasm. The catalysed reaction is an aldehyde + O2 + H2O = a carboxylate + H2O2 + H(+). The enzyme catalyses retinal + O2 + H2O = retinoate + H2O2 + H(+). With respect to regulation, inhibited by menadione and isovanillin. Not inhibited by allopurinol, a xanthine dehydrogenase potent inhibitor. Its function is as follows. Oxidase with broad substrate specificity, oxidizing aromatic azaheterocycles, such as N1-methylnicotinamide, N-methylphthalazinium and phthalazine, as well as aldehydes, such as benzaldehyde, retinal, pyridoxal, and vanillin. Plays a key role in the metabolism of xenobiotics and drugs containing aromatic azaheterocyclic substituents. Participates in the bioactivation of prodrugs such as famciclovir, catalyzing the oxidation step from 6-deoxypenciclovir to penciclovir, which is a potent antiviral agent. Is probably involved in the regulation of reactive oxygen species homeostasis. May be a prominent source of superoxide generation via the one-electron reduction of molecular oxygen. May also catalyze nitric oxide (NO) production via the reduction of nitrite to NO with NADH or aldehyde as electron donor. May play a role in adipogenesis. The polypeptide is Aldehyde oxidase 1 (Cavia porcellus (Guinea pig)).